The chain runs to 310 residues: Ribosomal RNA small subunit methyltransferase H (310 aa).

S-adenosyl-L-methionine-binding positions include 33 to 35, D53, F79, D100, and Q107; that span reads AGH.

It belongs to the methyltransferase superfamily. RsmH family.

Its subcellular location is the cytoplasm. The catalysed reaction is cytidine(1402) in 16S rRNA + S-adenosyl-L-methionine = N(4)-methylcytidine(1402) in 16S rRNA + S-adenosyl-L-homocysteine + H(+). Functionally, specifically methylates the N4 position of cytidine in position 1402 (C1402) of 16S rRNA. This chain is Ribosomal RNA small subunit methyltransferase H, found in Clostridium beijerinckii (strain ATCC 51743 / NCIMB 8052) (Clostridium acetobutylicum).